The chain runs to 472 residues: ATP synthase subunit beta (472 aa).

Residue 160–167 (GGAGVGKT) coordinates ATP.

Belongs to the ATPase alpha/beta chains family. As to quaternary structure, F-type ATPases have 2 components, CF(1) - the catalytic core - and CF(0) - the membrane proton channel. CF(1) has five subunits: alpha(3), beta(3), gamma(1), delta(1), epsilon(1). CF(0) has three main subunits: a(1), b(2) and c(9-12). The alpha and beta chains form an alternating ring which encloses part of the gamma chain. CF(1) is attached to CF(0) by a central stalk formed by the gamma and epsilon chains, while a peripheral stalk is formed by the delta and b chains.

It is found in the cell membrane. The enzyme catalyses ATP + H2O + 4 H(+)(in) = ADP + phosphate + 5 H(+)(out). Its function is as follows. Produces ATP from ADP in the presence of a proton gradient across the membrane. The catalytic sites are hosted primarily by the beta subunits. The protein is ATP synthase subunit beta of Lachnoclostridium phytofermentans (strain ATCC 700394 / DSM 18823 / ISDg) (Clostridium phytofermentans).